Consider the following 733-residue polypeptide: Acyl-coenzyme A oxidase (733 aa).

It belongs to the acyl-CoA oxidase family. FAD is required as a cofactor.

It localises to the peroxisome. It catalyses the reaction a 2,3-saturated acyl-CoA + O2 = a (2E)-enoyl-CoA + H2O2. Its pathway is lipid metabolism; peroxisomal fatty acid beta-oxidation. This Eremothecium gossypii (strain ATCC 10895 / CBS 109.51 / FGSC 9923 / NRRL Y-1056) (Yeast) protein is Acyl-coenzyme A oxidase (POX1).